The chain runs to 385 residues: Telomere-binding protein subunit beta (385 aa).

Disordered regions lie at residues 231-329 and 343-385; these read AADH…ALTT and WHEK…AAKK. The segment covering 242 to 262 has biased composition (basic residues); that stretch reads GGAKGKGKAAAKAAKGKKLSA. Over residues 263-280 the composition is skewed to basic and acidic residues; sequence KKGDSSAADVRKSVDKIV. Composition is skewed to low complexity over residues 295-304, 312-326, and 365-375; these read KSQAPAAGKS, KAVP…KKSA, and GKASATSGKAS. Positions 376 to 385 are enriched in basic residues; sequence KASKKTAAKK.

As to quaternary structure, heterodimer of an alpha and a beta subunit.

The protein resides in the nucleus. Its subcellular location is the chromosome. The protein localises to the telomere. May function as protective capping of the single-stranded telomeric overhang. May also participate in telomere length regulation during DNA replication. Binds specifically to the T4G4-containing extension on the 3'strand and protects this region of the telomere from nuclease digestion and chemical modification. The polypeptide is Telomere-binding protein subunit beta (MAC-41A) (Sterkiella nova (Ciliate)).